Reading from the N-terminus, the 1129-residue chain is Ubiquitin carboxyl-terminal hydrolase 7 (1129 aa).

The region spanning 29–169 is the MATH domain; it reads EGHLALDIER…DDVIRLRCRF (141 aa). One can recognise a USP domain in the interval 190 to 500; sequence IGLRNQGATC…SAYMLVYVRD (311 aa). The active-site Nucleophile is the Cys-199. Catalysis depends on His-439, which acts as the Proton acceptor.

Belongs to the peptidase C19 family.

Its subcellular location is the nucleus. It carries out the reaction Thiol-dependent hydrolysis of ester, thioester, amide, peptide and isopeptide bonds formed by the C-terminal Gly of ubiquitin (a 76-residue protein attached to proteins as an intracellular targeting signal).. In terms of biological role, hydrolase that deubiquitinates target proteins. The protein is Ubiquitin carboxyl-terminal hydrolase 7 of Caenorhabditis briggsae.